The primary structure comprises 307 residues: Methionyl-tRNA formyltransferase (307 aa).

108 to 111 contacts (6S)-5,6,7,8-tetrahydrofolate; that stretch reads SLLP.

It belongs to the Fmt family.

The catalysed reaction is L-methionyl-tRNA(fMet) + (6R)-10-formyltetrahydrofolate = N-formyl-L-methionyl-tRNA(fMet) + (6S)-5,6,7,8-tetrahydrofolate + H(+). Its function is as follows. Attaches a formyl group to the free amino group of methionyl-tRNA(fMet). The formyl group appears to play a dual role in the initiator identity of N-formylmethionyl-tRNA by promoting its recognition by IF2 and preventing the misappropriation of this tRNA by the elongation apparatus. This Xanthomonas euvesicatoria pv. vesicatoria (strain 85-10) (Xanthomonas campestris pv. vesicatoria) protein is Methionyl-tRNA formyltransferase.